The sequence spans 206 residues: Guanylate kinase (206 aa).

One can recognise a Guanylate kinase-like domain in the interval Phe5–Lys183. Gly12–Ser19 serves as a coordination point for ATP.

This sequence belongs to the guanylate kinase family.

It is found in the cytoplasm. It carries out the reaction GMP + ATP = GDP + ADP. In terms of biological role, essential for recycling GMP and indirectly, cGMP. In Helicobacter pylori (strain ATCC 700392 / 26695) (Campylobacter pylori), this protein is Guanylate kinase (gmk).